Reading from the N-terminus, the 468-residue chain is Peroxisome proliferator-activated receptor alpha (468 aa).

The disordered stretch occupies residues 1-20 (MVDTESQICPLSPFGDDDLE). The nuclear receptor DNA-binding region spans 99–173 (NIECRICGDK…DGMSHNAIRF (75 aa)). NR C4-type zinc fingers lie at residues 102 to 122 (CRIC…CEGC) and 139 to 161 (CDRS…FQKC). Residues 239–466 (FVIHDMETLC…HPLLQEIYRD (228 aa)) form the NR LBD domain. The interval 304 to 433 (DQVTLLKYGV…PKLLQKMADL (130 aa)) is required for heterodimerization with RXRA.

Belongs to the nuclear hormone receptor family. NR1 subfamily. As to quaternary structure, heterodimer; with RXRA. This heterodimerization is required for DNA binding and transactivation activity. Interacts with NCOA3 coactivator. Interacts with CITED2; the interaction stimulates its transcriptional activity. Also interacts with PPARBP in vitro. Interacts with AKAP13, LPIN1, PRDM16 and coactivator NCOA6. Interacts with ASXL1 and ASXL2. Interacts with PER2. Interacts with SIRT1; the interaction seems to be modulated by NAD(+) levels. Interacts with CRY1 and CRY2. In hepatocytes, interacts with PAQR3 and HUWE1; the interactions promote PPARA poylubiquitination and HUWE1-mediated degradation. Ubiquitinated by E3 ubiquitin-protein ligase HUWE1; leading to proteasomal degradation. Post-translationally, phosphorylated.

It is found in the nucleus. Functionally, ligand-activated transcription factor. Key regulator of lipid metabolism. Activated by the endogenous ligand 1-palmitoyl-2-oleoyl-sn-glycerol-3-phosphocholine (16:0/18:1-GPC). Activated by oleylethanolamide, a naturally occurring lipid that regulates satiety. Receptor for peroxisome proliferators such as hypolipidemic drugs and fatty acids. Regulates the peroxisomal beta-oxidation pathway of fatty acids. Functions as a transcription activator for the ACOX1 and P450 genes. Transactivation activity requires heterodimerization with RXRA and is antagonized by NR2C2. May be required for the propagation of clock information to metabolic pathways regulated by PER2. This chain is Peroxisome proliferator-activated receptor alpha (PPARA), found in Phascolarctos cinereus (Koala).